The sequence spans 183 residues: Bifunctional protein PyrR (183 aa).

The PRPP-binding motif lies at 102 to 114 (VVLVDDVLYTGRT).

The protein belongs to the purine/pyrimidine phosphoribosyltransferase family. PyrR subfamily. Homodimer and homohexamer; in equilibrium.

The catalysed reaction is UMP + diphosphate = 5-phospho-alpha-D-ribose 1-diphosphate + uracil. Functionally, regulates transcriptional attenuation of the pyrimidine nucleotide (pyr) operon by binding in a uridine-dependent manner to specific sites on pyr mRNA. This disrupts an antiterminator hairpin in the RNA and favors formation of a downstream transcription terminator, leading to a reduced expression of downstream genes. In terms of biological role, also displays a weak uracil phosphoribosyltransferase activity which is not physiologically significant. This Listeria monocytogenes serotype 4a (strain HCC23) protein is Bifunctional protein PyrR.